The sequence spans 445 residues: Phosphoglucosamine mutase (445 aa).

Ser102 serves as the catalytic Phosphoserine intermediate. 4 residues coordinate Mg(2+): Ser102, Asp240, Asp242, and Asp244. Ser102 carries the post-translational modification Phosphoserine.

It belongs to the phosphohexose mutase family. Mg(2+) serves as cofactor. In terms of processing, activated by phosphorylation.

It carries out the reaction alpha-D-glucosamine 1-phosphate = D-glucosamine 6-phosphate. Functionally, catalyzes the conversion of glucosamine-6-phosphate to glucosamine-1-phosphate. This is Phosphoglucosamine mutase from Mycolicibacterium gilvum (strain PYR-GCK) (Mycobacterium gilvum (strain PYR-GCK)).